The following is a 323-amino-acid chain: Cyclin-H (323 aa).

Serine 5 carries the post-translational modification Phosphoserine; by CDK8. Serine 132 carries the post-translational modification Phosphoserine. Positions 299–323 (DDDYVPKKSKHEEEEWTDDDLVESL) are disordered. Positions 302-311 (YVPKKSKHEE) are enriched in basic and acidic residues. Acidic residues predominate over residues 312 to 323 (EEWTDDDLVESL). Phosphothreonine is present on threonine 315. Position 322 is a phosphoserine (serine 322).

Belongs to the cyclin family. Cyclin C subfamily. In terms of assembly, associates primarily with CDK7 and MAT1 to form the CAK complex. CAK can further associate with the core-TFIIH to form the TFIIH basal transcription factor.

The protein localises to the nucleus. Regulates CDK7, the catalytic subunit of the CDK-activating kinase (CAK) enzymatic complex. CAK activates the cyclin-associated kinases CDK1, CDK2, CDK4 and CDK6 by threonine phosphorylation. CAK complexed to the core-TFIIH basal transcription factor activates RNA polymerase II by serine phosphorylation of the repetitive C-terminal domain (CTD) of its large subunit (POLR2A), allowing its escape from the promoter and elongation of the transcripts. Involved in cell cycle control and in RNA transcription by RNA polymerase II. Its expression and activity are constant throughout the cell cycle. The protein is Cyclin-H (CCNH) of Macaca fascicularis (Crab-eating macaque).